We begin with the raw amino-acid sequence, 629 residues long: Probable alpha-L-arabinofuranosidase A (629 aa).

The signal sequence occupies residues 1–25 (MVALSTLSGLSALPFLFSLVQNVYG). Residues N36, N51, N140, N152, N168, N171, N260, N494, and N534 are each glycosylated (N-linked (GlcNAc...) asparagine).

The protein belongs to the glycosyl hydrolase 51 family.

Its subcellular location is the secreted. It catalyses the reaction Hydrolysis of terminal non-reducing alpha-L-arabinofuranoside residues in alpha-L-arabinosides.. It functions in the pathway glycan metabolism; L-arabinan degradation. Functionally, alpha-L-arabinofuranosidase involved in the degradation of arabinoxylan, a major component of plant hemicellulose. Acts only on small linear 1,5-alpha-linked L-arabinofuranosyl oligosaccharides. In Aspergillus oryzae (strain ATCC 42149 / RIB 40) (Yellow koji mold), this protein is Probable alpha-L-arabinofuranosidase A (abfA).